The following is a 245-amino-acid chain: Probable phosphatase YpAngola_A2446 (245 aa).

9 residues coordinate Zn(2+): His-7, His-9, His-15, His-40, Glu-73, His-101, His-131, Asp-192, and His-194.

This sequence belongs to the PHP family. Homotrimer. Requires Zn(2+) as cofactor.

The chain is Probable phosphatase YpAngola_A2446 from Yersinia pestis bv. Antiqua (strain Angola).